A 101-amino-acid chain; its full sequence is NADH-quinone oxidoreductase subunit K (101 aa).

Helical transmembrane passes span 4 to 24 (LPHY…GIFV), 30 to 50 (IVIL…LVAF), and 61 to 81 (IFAM…LAIL).

Belongs to the complex I subunit 4L family. In terms of assembly, NDH-1 is composed of 14 different subunits. Subunits NuoA, H, J, K, L, M, N constitute the membrane sector of the complex.

The protein resides in the cell inner membrane. It carries out the reaction a quinone + NADH + 5 H(+)(in) = a quinol + NAD(+) + 4 H(+)(out). Functionally, NDH-1 shuttles electrons from NADH, via FMN and iron-sulfur (Fe-S) centers, to quinones in the respiratory chain. The immediate electron acceptor for the enzyme in this species is believed to be ubiquinone. Couples the redox reaction to proton translocation (for every two electrons transferred, four hydrogen ions are translocated across the cytoplasmic membrane), and thus conserves the redox energy in a proton gradient. The sequence is that of NADH-quinone oxidoreductase subunit K from Caulobacter vibrioides (strain ATCC 19089 / CIP 103742 / CB 15) (Caulobacter crescentus).